The primary structure comprises 453 residues: Chromosomal replication initiator protein DnaA (453 aa).

The interval M1–V76 is domain I, interacts with DnaA modulators. The segment at V76–L115 is domain II. The segment at G116–A333 is domain III, AAA+ region. ATP contacts are provided by G160, G162, K163, and T164. The interval A334–S453 is domain IV, binds dsDNA.

It belongs to the DnaA family. Oligomerizes as a right-handed, spiral filament on DNA at oriC.

The protein localises to the cytoplasm. Functionally, plays an essential role in the initiation and regulation of chromosomal replication. ATP-DnaA binds to the origin of replication (oriC) to initiate formation of the DNA replication initiation complex once per cell cycle. Binds the DnaA box (a 9 base pair repeat at the origin) and separates the double-stranded (ds)DNA. Forms a right-handed helical filament on oriC DNA; dsDNA binds to the exterior of the filament while single-stranded (ss)DNA is stabiized in the filament's interior. The ATP-DnaA-oriC complex binds and stabilizes one strand of the AT-rich DNA unwinding element (DUE), permitting loading of DNA polymerase. After initiation quickly degrades to an ADP-DnaA complex that is not apt for DNA replication. Binds acidic phospholipids. This chain is Chromosomal replication initiator protein DnaA, found in Sphingopyxis alaskensis (strain DSM 13593 / LMG 18877 / RB2256) (Sphingomonas alaskensis).